The primary structure comprises 599 residues: DNA primase (599 aa).

The segment at 38–62 (CPFHDEKTPSFTVSEDKQICHCFGC) adopts a CHC2-type zinc-finger fold. The 82-residue stretch at 260 to 341 (DEIVLLEGFM…NVFVIQLPSG (82 aa)) folds into the Toprim domain. Mg(2+)-binding residues include Glu266, Asp310, and Asp312.

Belongs to the DnaG primase family. In terms of assembly, monomer. Interacts with DnaB. Zn(2+) serves as cofactor. Requires Mg(2+) as cofactor.

The catalysed reaction is ssDNA + n NTP = ssDNA/pppN(pN)n-1 hybrid + (n-1) diphosphate.. In terms of biological role, RNA polymerase that catalyzes the synthesis of short RNA molecules used as primers for DNA polymerase during DNA replication. The sequence is that of DNA primase from Staphylococcus aureus (strain MRSA252).